We begin with the raw amino-acid sequence, 360 residues long: Phenylalanine--tRNA ligase alpha subunit (360 aa).

E260 is a binding site for Mg(2+).

This sequence belongs to the class-II aminoacyl-tRNA synthetase family. Phe-tRNA synthetase alpha subunit type 1 subfamily. As to quaternary structure, tetramer of two alpha and two beta subunits. The cofactor is Mg(2+).

It localises to the cytoplasm. It carries out the reaction tRNA(Phe) + L-phenylalanine + ATP = L-phenylalanyl-tRNA(Phe) + AMP + diphosphate + H(+). The polypeptide is Phenylalanine--tRNA ligase alpha subunit (Bradyrhizobium sp. (strain BTAi1 / ATCC BAA-1182)).